We begin with the raw amino-acid sequence, 272 residues long: Shikimate dehydrogenase (NADP(+)) (272 aa).

Shikimate-binding positions include 14-16 (SKS) and Thr-61. Lys-65 functions as the Proton acceptor in the catalytic mechanism. Glu-77 serves as a coordination point for NADP(+). Residues Asn-86 and Asp-102 each coordinate shikimate. NADP(+)-binding positions include 126 to 130 (GAGGA), 149 to 154 (NRTVFR), and Met-213. Position 215 (Tyr-215) interacts with shikimate. Position 237 (Gly-237) interacts with NADP(+).

It belongs to the shikimate dehydrogenase family. Homodimer.

The catalysed reaction is shikimate + NADP(+) = 3-dehydroshikimate + NADPH + H(+). Its pathway is metabolic intermediate biosynthesis; chorismate biosynthesis; chorismate from D-erythrose 4-phosphate and phosphoenolpyruvate: step 4/7. Functionally, involved in the biosynthesis of the chorismate, which leads to the biosynthesis of aromatic amino acids. Catalyzes the reversible NADPH linked reduction of 3-dehydroshikimate (DHSA) to yield shikimate (SA). The sequence is that of Shikimate dehydrogenase (NADP(+)) from Escherichia coli O127:H6 (strain E2348/69 / EPEC).